The chain runs to 122 residues: Large ribosomal subunit protein uL14 (122 aa).

It belongs to the universal ribosomal protein uL14 family. In terms of assembly, part of the 50S ribosomal subunit. Forms a cluster with proteins L3 and L19. In the 70S ribosome, L14 and L19 interact and together make contacts with the 16S rRNA in bridges B5 and B8.

Functionally, binds to 23S rRNA. Forms part of two intersubunit bridges in the 70S ribosome. This chain is Large ribosomal subunit protein uL14, found in Mycoplasma pneumoniae (strain ATCC 29342 / M129 / Subtype 1) (Mycoplasmoides pneumoniae).